We begin with the raw amino-acid sequence, 147 residues long: Hemoglobin subunit beta-1 (147 aa).

In terms of domain architecture, Globin spans 3 to 147 (KWSKTELTII…VVSALGKQYH (145 aa)). His-64 and His-93 together coordinate heme b.

The protein belongs to the globin family. In terms of assembly, hb1 is a heterotetramer of two alpha chains and two beta-1 chains. In terms of tissue distribution, red blood cells.

Functionally, involved in oxygen transport from gills to the various peripheral tissues. The sequence is that of Hemoglobin subunit beta-1 (hbb1) from Cygnodraco mawsoni (Antarctic dragonfish).